Here is a 263-residue protein sequence, read N- to C-terminus: Granzyme K (263 aa).

The N-terminal stretch at 1 to 21 (MRFSSWALVSLVAGVYMSSEC) is a signal peptide. Residues 22–25 (FHTE) constitute a propeptide, activation peptide. The Peptidase S1 domain maps to 26–258 (IIGGREVQPH…YQTWIKSKLA (233 aa)). A disulfide bridge links Cys51 with Cys67. Residues His66 and Asp115 each act as charge relay system in the active site. Cystine bridges form between Cys148–Cys219, Cys180–Cys198, and Cys209–Cys233. Ser213 (charge relay system) is an active-site residue.

It belongs to the peptidase S1 family. Granzyme subfamily.

The protein localises to the cytoplasmic granule. This is Granzyme K (Gzmk) from Mus musculus (Mouse).